Here is a 1079-residue protein sequence, read N- to C-terminus: Tudor domain-containing protein 7A (1079 aa).

The HTH OST-type 1 domain maps to 3–76; sequence DVELVKKMLR…TGEVMCFAGV (74 aa). Residues 153–175 are disordered; sequence LPSSRAPAWQMNRKSPVPEKTSV. HTH OST-type domains are found at residues 205 to 270 and 366 to 434; these read DVEL…RLVY and LTTE…ILYT. Tudor domains lie at 519–576 and 708–765; these read SPKI…FMTL and RPFC…FLKE.

The protein belongs to the TDRD7 family.

It localises to the cytoplasm. Component of specific cytoplasmic RNA granules involved in post-transcriptional regulation of specific genes: probably acts by binding to specific mRNAs and regulating their translation. Probably required during spermatogenesis. Required for structural integrity of granules in primordial germ cells (PGCs). The protein is Tudor domain-containing protein 7A (tdrd7a) of Danio rerio (Zebrafish).